A 494-amino-acid chain; its full sequence is Membrane-bound lytic murein transglycosylase F (494 aa).

The N-terminal stretch at 1–20 (MIKYLYVILLGLLLSGCQPA) is a signal peptide. Positions 21–259 (EVVEIEASPK…HLNEKYFGHV (239 aa)) are non-LT domain. Residues 260-494 (KRFDYVDTRA…LKPKLGAGQP (235 aa)) form an LT domain region. Residue glutamate 304 is part of the active site. Polar residues predominate over residues 473-485 (QSLASDSKTNNTL). The disordered stretch occupies residues 473–494 (QSLASDSKTNNTLKPKLGAGQP).

The protein in the N-terminal section; belongs to the bacterial solute-binding protein 3 family. In the C-terminal section; belongs to the transglycosylase Slt family.

The protein resides in the cell outer membrane. The catalysed reaction is Exolytic cleavage of the (1-&gt;4)-beta-glycosidic linkage between N-acetylmuramic acid (MurNAc) and N-acetylglucosamine (GlcNAc) residues in peptidoglycan, from either the reducing or the non-reducing ends of the peptidoglycan chains, with concomitant formation of a 1,6-anhydrobond in the MurNAc residue.. Murein-degrading enzyme that degrades murein glycan strands and insoluble, high-molecular weight murein sacculi, with the concomitant formation of a 1,6-anhydromuramoyl product. Lytic transglycosylases (LTs) play an integral role in the metabolism of the peptidoglycan (PG) sacculus. Their lytic action creates space within the PG sacculus to allow for its expansion as well as for the insertion of various structures such as secretion systems and flagella. This Shewanella denitrificans (strain OS217 / ATCC BAA-1090 / DSM 15013) protein is Membrane-bound lytic murein transglycosylase F.